The primary structure comprises 196 residues: MIPIVVEETGRGERAFDIYSRLLRERIVFLGEQVTNDSANRIVAQLLFLEAEDPEKDIFLYINSPGGSVYDGFGIFDTIQHIKPDVHTVCVGLAASMGAFLLCAGAKGKRSSLQHSRIMIHQPLGGARGQATDIRIQADEILFLKQKLNTELSNRTGQPLSKIAEDTDRDFYMSPSEAISYGIIDNVLNKKPVSVL.

Serine 96 functions as the Nucleophile in the catalytic mechanism. Histidine 121 is an active-site residue.

This sequence belongs to the peptidase S14 family. As to quaternary structure, fourteen ClpP subunits assemble into 2 heptameric rings which stack back to back to give a disk-like structure with a central cavity, resembling the structure of eukaryotic proteasomes.

The protein resides in the cytoplasm. The enzyme catalyses Hydrolysis of proteins to small peptides in the presence of ATP and magnesium. alpha-casein is the usual test substrate. In the absence of ATP, only oligopeptides shorter than five residues are hydrolyzed (such as succinyl-Leu-Tyr-|-NHMec, and Leu-Tyr-Leu-|-Tyr-Trp, in which cleavage of the -Tyr-|-Leu- and -Tyr-|-Trp bonds also occurs).. In terms of biological role, cleaves peptides in various proteins in a process that requires ATP hydrolysis. Has a chymotrypsin-like activity. Plays a major role in the degradation of misfolded proteins. The protein is ATP-dependent Clp protease proteolytic subunit 1 of Prochlorococcus marinus (strain SARG / CCMP1375 / SS120).